The chain runs to 127 residues: Aspartate 1-decarboxylase (127 aa).

The active-site Schiff-base intermediate with substrate; via pyruvic acid is Ser25. Ser25 bears the Pyruvic acid (Ser) mark. Thr57 provides a ligand contact to substrate. Residue Tyr58 is the Proton donor of the active site. 73–75 (GAA) contributes to the substrate binding site.

This sequence belongs to the PanD family. As to quaternary structure, heterooctamer of four alpha and four beta subunits. Requires pyruvate as cofactor. Post-translationally, is synthesized initially as an inactive proenzyme, which is activated by self-cleavage at a specific serine bond to produce a beta-subunit with a hydroxyl group at its C-terminus and an alpha-subunit with a pyruvoyl group at its N-terminus.

The protein localises to the cytoplasm. The enzyme catalyses L-aspartate + H(+) = beta-alanine + CO2. Its pathway is cofactor biosynthesis; (R)-pantothenate biosynthesis; beta-alanine from L-aspartate: step 1/1. Catalyzes the pyruvoyl-dependent decarboxylation of aspartate to produce beta-alanine. In Vesicomyosocius okutanii subsp. Calyptogena okutanii (strain HA), this protein is Aspartate 1-decarboxylase.